Consider the following 584-residue polypeptide: Keratin, type I cytoskeletal 10 (584 aa).

Positions 1–15 (MSVRYSSSKHYSSSR) are enriched in low complexity. A disordered region spans residues 1–24 (MSVRYSSSKHYSSSRSGGGGGGGG). The head stretch occupies residues 1-145 (MSVRYSSSKH…GGDGGLLSGN (145 aa)). Residues Ser14, Ser16, Ser42, Ser53, Ser56, and Ser170 each carry the phosphoserine modification. The segment at 146-181 (EKVTMQNLNDRLASYLDKVRALEESNYELEGKIKEW) is coil 1A. Residues 146–460 (EKVTMQNLND…SLLEGEGSSG (315 aa)) enclose the IF rod domain. The segment at 182-202 (YEKHGNSHQGEPRDYSKYYKT) is linker 1. Residues 203 to 294 (IDDLKNQILN…KNHEEEMKDL (92 aa)) form a coil 1B region. The segment at 295 to 317 (RNVSTGDVNVEMNAAPGVDLTQL) is linker 12. The interval 318–456 (LNNMRSQYEQ…QTYRSLLEGE (139 aa)) is coil 2. The disordered stretch occupies residues 453–584 (LEGEGSSGGG…GESSSKGPRY (132 aa)). A compositionally biased stretch (gly residues) spans 457–563 (GSSGGGGRGG…GGGYGGGSSS (107 aa)). The tail stretch occupies residues 457–584 (GSSGGGGRGG…GESSSKGPRY (128 aa)). Residues 564-584 (GGHKSSSSGSVGESSSKGPRY) show a composition bias toward low complexity.

The protein belongs to the intermediate filament family. Heterotetramer of two type I and two type II keratins. Heterodimer with KRT1. Two heterodimers of KRT1 and KRT10 form a heterotetramer. The KRT10 subunit in the heterotetramer is probably disulfide-linked. Interacts with PLEC isoform 1C, when in a heterodimer with KRT1. As to quaternary structure, (Microbial infection) Interacts (via C-terminal tail domain) with the S.aureus clumping factor, clfB; this interaction probably mediates S.aureus attachment to the keratinized squamous epithelial cells from the nasal cavity. In terms of assembly, (Microbial infection) Interacts (via the C-terminal tail domain) with S.pneumoniae serine-rich repeat protein PsrP; this interaction probably mediates S.pneumoniae adherence to lung tissue and subsequent pathogenesis. Neither protein has to be glycosylated for the interaction to occur. Seen in all suprabasal cell layers including stratum corneum. Expressed on the surface of lung cell lines. Localized on the surface of desquamated nasal epithelial cells (at protein level).

It is found in the secreted. The protein resides in the extracellular space. It localises to the cell surface. Its subcellular location is the cytoplasm. Plays a role in the establishment of the epidermal barrier on plantar skin. Involved in the maintenance of cell layer development and keratin filament bundles in suprabasal cells of the epithelium. Its function is as follows. (Microbial infection) Acts as a mediator of S.aureus adherence to desquamated nasal epithelial cells via clfB, and hence may play a role in nasal colonization. Functionally, (Microbial infection) Binds S.pneumoniae PsrP, mediating adherence of the bacteria to lung cell lines. Reduction of levels of KRT10 keratin decrease adherence, overexpression increases adherence. Neither protein has to be glycosylated for the interaction to occur. In Homo sapiens (Human), this protein is Keratin, type I cytoskeletal 10 (KRT10).